A 124-amino-acid polypeptide reads, in one-letter code: Large ribosomal subunit protein uL18 (124 aa).

Belongs to the universal ribosomal protein uL18 family. As to quaternary structure, part of the 50S ribosomal subunit; part of the 5S rRNA/L5/L18/L25 subcomplex. Contacts the 5S and 23S rRNAs.

Functionally, this is one of the proteins that bind and probably mediate the attachment of the 5S RNA into the large ribosomal subunit, where it forms part of the central protuberance. The sequence is that of Large ribosomal subunit protein uL18 from Thermomicrobium roseum (strain ATCC 27502 / DSM 5159 / P-2).